The following is a 178-amino-acid chain: Ribosome maturation factor RimM (178 aa).

One can recognise a PRC barrel domain in the interval 99 to 178 (EGDFYWHDLI…TIEVDWDAGF (80 aa)).

Belongs to the RimM family. As to quaternary structure, binds ribosomal protein uS19.

It localises to the cytoplasm. In terms of biological role, an accessory protein needed during the final step in the assembly of 30S ribosomal subunit, possibly for assembly of the head region. Essential for efficient processing of 16S rRNA. May be needed both before and after RbfA during the maturation of 16S rRNA. It has affinity for free ribosomal 30S subunits but not for 70S ribosomes. This Mannheimia succiniciproducens (strain KCTC 0769BP / MBEL55E) protein is Ribosome maturation factor RimM.